A 474-amino-acid polypeptide reads, in one-letter code: Siroheme synthase (474 aa).

The interval 1-203 (MDYLPIFLKL…GRAEDAERVL (203 aa)) is precorrin-2 dehydrogenase /sirohydrochlorin ferrochelatase. NAD(+) contacts are provided by residues 22 to 23 (EV) and 43 to 44 (AS). A uroporphyrinogen-III C-methyltransferase region spans residues 219–474 (GSVALVGAGP…QETEGRSGNG (256 aa)). Position 228 (P228) interacts with S-adenosyl-L-methionine. D251 acts as the Proton acceptor in catalysis. Catalysis depends on K273, which acts as the Proton donor. Residues 304 to 306 (GGD), I309, 334 to 335 (TA), M387, and G416 each bind S-adenosyl-L-methionine.

It in the N-terminal section; belongs to the precorrin-2 dehydrogenase / sirohydrochlorin ferrochelatase family. The protein in the C-terminal section; belongs to the precorrin methyltransferase family.

It catalyses the reaction uroporphyrinogen III + 2 S-adenosyl-L-methionine = precorrin-2 + 2 S-adenosyl-L-homocysteine + H(+). It carries out the reaction precorrin-2 + NAD(+) = sirohydrochlorin + NADH + 2 H(+). The catalysed reaction is siroheme + 2 H(+) = sirohydrochlorin + Fe(2+). The protein operates within cofactor biosynthesis; adenosylcobalamin biosynthesis; precorrin-2 from uroporphyrinogen III: step 1/1. Its pathway is cofactor biosynthesis; adenosylcobalamin biosynthesis; sirohydrochlorin from precorrin-2: step 1/1. It participates in porphyrin-containing compound metabolism; siroheme biosynthesis; precorrin-2 from uroporphyrinogen III: step 1/1. It functions in the pathway porphyrin-containing compound metabolism; siroheme biosynthesis; siroheme from sirohydrochlorin: step 1/1. The protein operates within porphyrin-containing compound metabolism; siroheme biosynthesis; sirohydrochlorin from precorrin-2: step 1/1. In terms of biological role, multifunctional enzyme that catalyzes the SAM-dependent methylations of uroporphyrinogen III at position C-2 and C-7 to form precorrin-2 via precorrin-1. Then it catalyzes the NAD-dependent ring dehydrogenation of precorrin-2 to yield sirohydrochlorin. Finally, it catalyzes the ferrochelation of sirohydrochlorin to yield siroheme. This Methylococcus capsulatus (strain ATCC 33009 / NCIMB 11132 / Bath) protein is Siroheme synthase.